Consider the following 507-residue polypeptide: Putative propionyl-CoA carboxylase beta chain (507 aa).

The segment covering 1-25 (MNEHMDHFYTKRKQAEEGGGREKLA) has biased composition (basic and acidic residues). The interval 1 to 30 (MNEHMDHFYTKRKQAEEGGGREKLAQQRQK) is disordered. Residues 1–254 (MNEHMDHFYT…NGRTTEPKPE (254 aa)) form the CoA carboxyltransferase N-terminal domain. The interval 1–501 (MNEHMDHFYT…HKTEERPKKK (501 aa)) is carboxyltransferase. In terms of domain architecture, CoA carboxyltransferase C-terminal spans 256-501 (EASRPLLNRL…HKTEERPKKK (246 aa)).

Belongs to the AccD/PCCB family. Probably a dodecamer composed of six biotin-containing alpha subunits and six beta subunits.

It carries out the reaction propanoyl-CoA + hydrogencarbonate + ATP = (S)-methylmalonyl-CoA + ADP + phosphate + H(+). It participates in metabolic intermediate metabolism; propanoyl-CoA degradation; succinyl-CoA from propanoyl-CoA: step 1/3. The polypeptide is Putative propionyl-CoA carboxylase beta chain (yqjD) (Bacillus subtilis (strain 168)).